Consider the following 102-residue polypeptide: Monothiol glutaredoxin-S7 (102 aa).

Residues Met-1–Trp-101 enclose the Glutaredoxin domain. Residue Cys-21 coordinates [2Fe-2S] cluster. The Responsive for interaction with TGA factors motif lies at Ala-99–Leu-102.

It belongs to the glutaredoxin family. CC-type subfamily.

It is found in the cytoplasm. The protein localises to the nucleus. May only reduce GSH-thiol disulfides, but not protein disulfides. This is Monothiol glutaredoxin-S7 (GRXS7) from Arabidopsis thaliana (Mouse-ear cress).